A 687-amino-acid polypeptide reads, in one-letter code: Translation initiation factor IF-2 (687 aa).

One can recognise a tr-type G domain in the interval 186 to 355 (KRPPIVTVMG…LLTAEMLELK (170 aa)). Residues 195-202 (GHVDHGKT) are G1. 195 to 202 (GHVDHGKT) is a GTP binding site. The segment at 220–224 (GITQH) is G2. Residues 241 to 244 (DTPG) are G3. GTP contacts are provided by residues 241–245 (DTPGH) and 295–298 (NKID). The interval 295 to 298 (NKID) is G4. The tract at residues 331 to 333 (SAK) is G5.

It belongs to the TRAFAC class translation factor GTPase superfamily. Classic translation factor GTPase family. IF-2 subfamily.

It is found in the cytoplasm. In terms of biological role, one of the essential components for the initiation of protein synthesis. Protects formylmethionyl-tRNA from spontaneous hydrolysis and promotes its binding to the 30S ribosomal subunits. Also involved in the hydrolysis of GTP during the formation of the 70S ribosomal complex. The sequence is that of Translation initiation factor IF-2 from Clostridium botulinum (strain Eklund 17B / Type B).